The following is a 105-amino-acid chain: Small ribosomal subunit protein uS10 (105 aa).

Belongs to the universal ribosomal protein uS10 family. In terms of assembly, part of the 30S ribosomal subunit.

Its function is as follows. Involved in the binding of tRNA to the ribosomes. The sequence is that of Small ribosomal subunit protein uS10 from Solidesulfovibrio magneticus (strain ATCC 700980 / DSM 13731 / RS-1) (Desulfovibrio magneticus).